Reading from the N-terminus, the 498-residue chain is MGSIDSNYDTESAGQCRPLEPEEFRKQAHQMVDFIADYYKNIESYPVLSQVEPGYLQSRLPETAPYRPEPFESILKDVHKDIIPGVTHWLSPNFFAYFPATVSSAAFVGEMLCTCFNAVGFNWLASPAELELEMVVMDWLASMLKLPNSFTFLGTGGGVIQGTTSEAILCTLIAARDRALESIGVDSIHKLVVYGSDQTHSTYAKACNLAGILPCNIRSIRTEAVANFSLSPDSLHREIEADVAAGMVPLYLCATVGTTSTTAIDSLSPLADVANDYGLWFHVDAAYAGSACICPEFRHYLDGIERADSLSLSPHKWLLSYLDCCCLWVKRPSVLVKALSTDPEYLKNKPSESNSVVDFKDWQVGTGRRFKALRLWFVMRSYGVANLQSHIRSDIQMAKMFEEFVNSDPRFEIVVPRVFSLVCFRLNPFSKSDPCNTELLNRKLLEWVNSTGQVYITHTKVGGVYMLRFAVGATLTEEHHVSAAWKLIREGADALLCS.

An N6-(pyridoxal phosphate)lysine modification is found at Lys-316.

It belongs to the group II decarboxylase family. Pyridoxal 5'-phosphate serves as cofactor.

The enzyme catalyses L-tryptophan + H(+) = tryptamine + CO2. In terms of biological role, involved in the biosynthesis of tryptamine. Supplies tryptamine for the indole moiety of camptothecin (CPT), an anti-cancer monoterpene alkaloid. Represents a key step in monoterpene indole alkaloid biosynthesis. Is specific for tryptophan, and inactive against tyrosine, phenylalanine and 3,4-dihydroxyphenylalanine (dopa). The chain is Tryptophan decarboxylase TDC2 from Camptotheca acuminata (Happy tree).